The primary structure comprises 536 residues: Zinc finger protein 623 (536 aa).

The segment at glycine 57 to glycine 77 is disordered. Over residues glutamate 64–glutamine 74 the composition is skewed to polar residues. 13 C2H2-type zinc fingers span residues asparagine 123–histidine 145, tyrosine 151–histidine 173, tyrosine 179–histidine 201, phenylalanine 207–histidine 229, phenylalanine 235–histidine 257, tyrosine 263–histidine 285, tyrosine 291–histidine 313, phenylalanine 319–histidine 341, tyrosine 347–histidine 369, tyrosine 375–histidine 397, tyrosine 403–histidine 425, phenylalanine 431–histidine 453, and tyrosine 459–histidine 481. Lysine 445 is covalently cross-linked (Glycyl lysine isopeptide (Lys-Gly) (interchain with G-Cter in SUMO2)). Residues leucine 513–leucine 536 are disordered. Over residues leucine 522–leucine 536 the composition is skewed to basic and acidic residues.

Belongs to the krueppel C2H2-type zinc-finger protein family.

It is found in the nucleus. Functionally, may be involved in transcriptional regulation. The chain is Zinc finger protein 623 (ZNF623) from Homo sapiens (Human).